We begin with the raw amino-acid sequence, 79 residues long: Small ribosomal subunit protein bS18 (79 aa).

This sequence belongs to the bacterial ribosomal protein bS18 family. As to quaternary structure, part of the 30S ribosomal subunit. Forms a tight heterodimer with protein bS6.

In terms of biological role, binds as a heterodimer with protein bS6 to the central domain of the 16S rRNA, where it helps stabilize the platform of the 30S subunit. The sequence is that of Small ribosomal subunit protein bS18 from Streptococcus thermophilus (strain CNRZ 1066).